A 429-amino-acid chain; its full sequence is Enolase (429 aa).

Position 163 (glutamine 163) interacts with (2R)-2-phosphoglycerate. The Proton donor role is filled by glutamate 205. Mg(2+) is bound by residues aspartate 242, glutamate 286, and aspartate 313. (2R)-2-phosphoglycerate-binding residues include lysine 338, arginine 367, serine 368, and lysine 389. Catalysis depends on lysine 338, which acts as the Proton acceptor.

Belongs to the enolase family. Mg(2+) serves as cofactor.

It is found in the cytoplasm. Its subcellular location is the secreted. The protein resides in the cell surface. It catalyses the reaction (2R)-2-phosphoglycerate = phosphoenolpyruvate + H2O. It functions in the pathway carbohydrate degradation; glycolysis; pyruvate from D-glyceraldehyde 3-phosphate: step 4/5. Catalyzes the reversible conversion of 2-phosphoglycerate (2-PG) into phosphoenolpyruvate (PEP). It is essential for the degradation of carbohydrates via glycolysis. The protein is Enolase of Pelobacter propionicus (strain DSM 2379 / NBRC 103807 / OttBd1).